The sequence spans 1370 residues: DNA-directed RNA polymerase subunit beta (1370 aa).

Belongs to the RNA polymerase beta chain family. As to quaternary structure, the RNAP catalytic core consists of 2 alpha, 1 beta, 1 beta' and 1 omega subunit. When a sigma factor is associated with the core the holoenzyme is formed, which can initiate transcription.

It catalyses the reaction RNA(n) + a ribonucleoside 5'-triphosphate = RNA(n+1) + diphosphate. DNA-dependent RNA polymerase catalyzes the transcription of DNA into RNA using the four ribonucleoside triphosphates as substrates. This chain is DNA-directed RNA polymerase subunit beta, found in Geotalea daltonii (strain DSM 22248 / JCM 15807 / FRC-32) (Geobacter daltonii).